The primary structure comprises 445 residues: Guanosine nucleotide diphosphate dissociation inhibitor At5g09550 (445 aa).

It belongs to the Rab GDI family.

In terms of biological role, regulates the GDP/GTP exchange reaction of most RAB proteins by inhibiting the dissociation of GDP from them, and the subsequent binding of GTP. This Arabidopsis thaliana (Mouse-ear cress) protein is Guanosine nucleotide diphosphate dissociation inhibitor At5g09550.